The sequence spans 533 residues: Phosphatidylinositol 4-kinase gamma 8 (533 aa).

In terms of domain architecture, PI3K/PI4K catalytic spans 101-397 (GAQPLLLPSG…AVSGSDDDDD (297 aa)). Residues 107 to 113 (LPSGLGG) are G-loop. Residues 108-114 (PSGLGGA), Lys-129, and 210-213 (QRFV) each bind ATP. The segment at 243–251 (LNLDRHAGN) is catalytic loop. The interval 276–302 (PIDHGLCLPECLDDPYFEWLNWPQASV) is activation loop. Residue Asp-278 participates in ATP binding.

Belongs to the PI3/PI4-kinase family. Type II PI4K subfamily.

The catalysed reaction is a 1,2-diacyl-sn-glycero-3-phospho-(1D-myo-inositol) + ATP = a 1,2-diacyl-sn-glycero-3-phospho-(1D-myo-inositol 4-phosphate) + ADP + H(+). In terms of biological role, the phosphorylation of phosphatidylinositol (PI) to PI4P is the first committed step in the generation of phosphatidylinositol 4,5-bisphosphate (PIP2), a precursor of the second messenger inositol 1,4,5-trisphosphate (InsP3). This chain is Phosphatidylinositol 4-kinase gamma 8 (PI4KG8), found in Arabidopsis thaliana (Mouse-ear cress).